Here is a 45-residue protein sequence, read N- to C-terminus: Bomanin Short 2 (45 aa).

The signal sequence occupies residues 1-20; that stretch reads MKFFSVVTVFVFGLLALANA. Residues 21-27 constitute a propeptide, removed by a dipeptidylpeptidase; the sequence is VPLSPDP. A disulfide bond links cysteine 36 and cysteine 39. At glycine 43 the chain carries Glycine amide.

In terms of tissue distribution, hemolymph (at protein level).

The protein resides in the secreted. Its function is as follows. Secreted immune-induced peptide induced by Toll signaling. Has a role in resistance to bacterial and fungal infections. This is Bomanin Short 2 from Drosophila melanogaster (Fruit fly).